Reading from the N-terminus, the 406-residue chain is Argininosuccinate synthase (406 aa).

ATP is bound at residue 9 to 17; sequence AYSGGLDTS. Y86 serves as a coordination point for L-citrulline. Position 116 (G116) interacts with ATP. T118, N122, and D123 together coordinate L-aspartate. N122 contributes to the L-citrulline binding site. R126, S174, S183, E259, and Y271 together coordinate L-citrulline.

Belongs to the argininosuccinate synthase family. Type 1 subfamily. In terms of assembly, homotetramer.

The protein resides in the cytoplasm. It catalyses the reaction L-citrulline + L-aspartate + ATP = 2-(N(omega)-L-arginino)succinate + AMP + diphosphate + H(+). Its pathway is amino-acid biosynthesis; L-arginine biosynthesis; L-arginine from L-ornithine and carbamoyl phosphate: step 2/3. This Geobacillus kaustophilus (strain HTA426) protein is Argininosuccinate synthase.